The chain runs to 152 residues: 3-hydroxyacyl-[acyl-carrier-protein] dehydratase FabZ (152 aa).

His-57 is a catalytic residue.

Belongs to the thioester dehydratase family. FabZ subfamily.

Its subcellular location is the cytoplasm. It carries out the reaction a (3R)-hydroxyacyl-[ACP] = a (2E)-enoyl-[ACP] + H2O. Its function is as follows. Involved in unsaturated fatty acids biosynthesis. Catalyzes the dehydration of short chain beta-hydroxyacyl-ACPs and long chain saturated and unsaturated beta-hydroxyacyl-ACPs. The polypeptide is 3-hydroxyacyl-[acyl-carrier-protein] dehydratase FabZ (Xanthomonas axonopodis pv. citri (strain 306)).